The following is a 64-amino-acid chain: uncharacterized protein (64 aa).

This is an uncharacterized protein from Escherichia coli O157:H7.